Here is an 82-residue protein sequence, read N- to C-terminus: Small ribosomal subunit protein uS17 (82 aa).

The protein belongs to the universal ribosomal protein uS17 family. In terms of assembly, part of the 30S ribosomal subunit.

In terms of biological role, one of the primary rRNA binding proteins, it binds specifically to the 5'-end of 16S ribosomal RNA. The chain is Small ribosomal subunit protein uS17 from Shewanella woodyi (strain ATCC 51908 / MS32).